The primary structure comprises 350 residues: Nicotinate-nucleotide--dimethylbenzimidazole phosphoribosyltransferase (350 aa).

Glu316 (proton acceptor) is an active-site residue.

This sequence belongs to the CobT family.

It carries out the reaction 5,6-dimethylbenzimidazole + nicotinate beta-D-ribonucleotide = alpha-ribazole 5'-phosphate + nicotinate + H(+). The protein operates within nucleoside biosynthesis; alpha-ribazole biosynthesis; alpha-ribazole from 5,6-dimethylbenzimidazole: step 1/2. Functionally, catalyzes the synthesis of alpha-ribazole-5'-phosphate from nicotinate mononucleotide (NAMN) and 5,6-dimethylbenzimidazole (DMB). This Pseudomonas savastanoi pv. phaseolicola (strain 1448A / Race 6) (Pseudomonas syringae pv. phaseolicola (strain 1448A / Race 6)) protein is Nicotinate-nucleotide--dimethylbenzimidazole phosphoribosyltransferase.